We begin with the raw amino-acid sequence, 185 residues long: Peptide deformylase (185 aa).

The Fe cation site is built by C94 and H136. The active site involves E137. H140 contacts Fe cation.

The protein belongs to the polypeptide deformylase family. The cofactor is Fe(2+).

The enzyme catalyses N-terminal N-formyl-L-methionyl-[peptide] + H2O = N-terminal L-methionyl-[peptide] + formate. Removes the formyl group from the N-terminal Met of newly synthesized proteins. Requires at least a dipeptide for an efficient rate of reaction. N-terminal L-methionine is a prerequisite for activity but the enzyme has broad specificity at other positions. This chain is Peptide deformylase, found in Chlorobium phaeobacteroides (strain BS1).